Consider the following 74-residue polypeptide: DNA-directed RNA polymerase subunit omega (74 aa).

This sequence belongs to the RNA polymerase subunit omega family. In terms of assembly, the RNAP catalytic core consists of 2 alpha, 1 beta, 1 beta' and 1 omega subunit. When a sigma factor is associated with the core the holoenzyme is formed, which can initiate transcription.

It carries out the reaction RNA(n) + a ribonucleoside 5'-triphosphate = RNA(n+1) + diphosphate. Promotes RNA polymerase assembly. Latches the N- and C-terminal regions of the beta' subunit thereby facilitating its interaction with the beta and alpha subunits. The chain is DNA-directed RNA polymerase subunit omega from Helicobacter pylori (strain Shi470).